A 216-amino-acid polypeptide reads, in one-letter code: MNYPHPIIAREGWPFIAIAAVVALLIHAVGGFGLAWPFWLLLVFVVQFFRDPPRAIPTQANAVLCPADGRIVAVETAHDPYADREALKISVFMNVFNVHSQRSPVDGAVQKVEYFPGAFLNAALDKASAENERNAVVIQTGAGHTVTAVQIAGLVARRILCYVRAGEPLSRGQRYGFIRFGSRVDVYLPKGSRARVSIGEKVSASSTILAELPEQP.

S182 acts as the Schiff-base intermediate with substrate; via pyruvic acid in catalysis. The residue at position 182 (S182) is a Pyruvic acid (Ser); by autocatalysis.

The protein belongs to the phosphatidylserine decarboxylase family. PSD-A subfamily. In terms of assembly, heterodimer of a large membrane-associated beta subunit and a small pyruvoyl-containing alpha subunit. Pyruvate serves as cofactor. In terms of processing, is synthesized initially as an inactive proenzyme. Formation of the active enzyme involves a self-maturation process in which the active site pyruvoyl group is generated from an internal serine residue via an autocatalytic post-translational modification. Two non-identical subunits are generated from the proenzyme in this reaction, and the pyruvate is formed at the N-terminus of the alpha chain, which is derived from the carboxyl end of the proenzyme. The post-translation cleavage follows an unusual pathway, termed non-hydrolytic serinolysis, in which the side chain hydroxyl group of the serine supplies its oxygen atom to form the C-terminus of the beta chain, while the remainder of the serine residue undergoes an oxidative deamination to produce ammonia and the pyruvoyl prosthetic group on the alpha chain.

It localises to the cell membrane. It catalyses the reaction a 1,2-diacyl-sn-glycero-3-phospho-L-serine + H(+) = a 1,2-diacyl-sn-glycero-3-phosphoethanolamine + CO2. The protein operates within phospholipid metabolism; phosphatidylethanolamine biosynthesis; phosphatidylethanolamine from CDP-diacylglycerol: step 2/2. Its function is as follows. Catalyzes the formation of phosphatidylethanolamine (PtdEtn) from phosphatidylserine (PtdSer). In Burkholderia pseudomallei (strain 1106a), this protein is Phosphatidylserine decarboxylase proenzyme.